Consider the following 257-residue polypeptide: MALAKRIIPCFDVTAGRVVKGVNFVELRDAGDPVEIARRYDAQGADELTFLDITATSDGRDLILPIIEAVASQVFIPLTVGGGVRAVEDVRRLLNAGADKVSMNSSAVANPPLVRDAADKYGSQCIVVAIDAKRVSADGEPPRWEVFTHGGRKGTGLDAVEWARKMAELGAGEILLTSMDRDGTKAGFDLALTRAVSDAVPVPVIASGGVGSLEHLAAGITEGHADAVLAASIFHYGEHTVGEAKRFMAERGIAVRL.

Active-site residues include Asp12 and Asp131.

Belongs to the HisA/HisF family. Heterodimer of HisH and HisF.

The protein localises to the cytoplasm. The enzyme catalyses 5-[(5-phospho-1-deoxy-D-ribulos-1-ylimino)methylamino]-1-(5-phospho-beta-D-ribosyl)imidazole-4-carboxamide + L-glutamine = D-erythro-1-(imidazol-4-yl)glycerol 3-phosphate + 5-amino-1-(5-phospho-beta-D-ribosyl)imidazole-4-carboxamide + L-glutamate + H(+). Its pathway is amino-acid biosynthesis; L-histidine biosynthesis; L-histidine from 5-phospho-alpha-D-ribose 1-diphosphate: step 5/9. In terms of biological role, IGPS catalyzes the conversion of PRFAR and glutamine to IGP, AICAR and glutamate. The HisF subunit catalyzes the cyclization activity that produces IGP and AICAR from PRFAR using the ammonia provided by the HisH subunit. This chain is Imidazole glycerol phosphate synthase subunit HisF, found in Burkholderia mallei (strain NCTC 10247).